The sequence spans 397 residues: Acetate kinase (397 aa).

Asn7 is a binding site for Mg(2+). Lys14 serves as a coordination point for ATP. Residue Arg90 participates in substrate binding. Asp147 acts as the Proton donor/acceptor in catalysis. Residues 207–211 (HLGNG), 282–284 (DFR), and 330–334 (GLGEN) each bind ATP. Residue Glu383 coordinates Mg(2+).

It belongs to the acetokinase family. Homodimer. Requires Mg(2+) as cofactor. It depends on Mn(2+) as a cofactor.

The protein localises to the cytoplasm. It carries out the reaction acetate + ATP = acetyl phosphate + ADP. It participates in metabolic intermediate biosynthesis; acetyl-CoA biosynthesis; acetyl-CoA from acetate: step 1/2. Catalyzes the formation of acetyl phosphate from acetate and ATP. Can also catalyze the reverse reaction. The polypeptide is Acetate kinase (Clostridium botulinum (strain Kyoto / Type A2)).